An 86-amino-acid polypeptide reads, in one-letter code: Dynein light chain 1, cytoplasmic (86 aa).

It belongs to the dynein light chain family. Homodimer. Cytoplasmic dynein consists of two catalytic heavy chains (HCs) and a number of non-catalytic subunits which present intermediate chains (ICs), light intermediate chains (LICs) and light chains (LCs). Component of the nuclear pore complex (NPC). NPC constitutes the exclusive means of nucleocytoplasmic transport. NPCs allow the passive diffusion of ions and small molecules and the active, nuclear transport receptor-mediated bidirectional transport of macromolecules such as proteins, RNAs, ribonucleoparticles (RNPs), and ribosomal subunits across the nuclear envelope. Due to its 8-fold rotational symmetry, all subunits are present with 8 copies or multiples thereof.

It localises to the cytoplasm. It is found in the cytoskeleton. Its subcellular location is the nucleus. The protein localises to the nuclear pore complex. Its function is as follows. Acts as one of several non-catalytic accessory components of the cytoplasmic dynein complex that are thought to be involved in linking dynein to cargos and to adapter proteins that regulate dynein function. Cytoplasmic dynein 1 acts as a motor for the intracellular retrograde motility of vesicles and organelles along microtubules. May play a role in changing or maintaining the spatial distribution of cytoskeletal structures. Also a component of the nuclear pore complex. The sequence is that of Dynein light chain 1, cytoplasmic (DYN2) from Candida glabrata (strain ATCC 2001 / BCRC 20586 / JCM 3761 / NBRC 0622 / NRRL Y-65 / CBS 138) (Yeast).